Reading from the N-terminus, the 288-residue chain is uncharacterized protein (288 aa).

The chain crosses the membrane as a helical span at residues 92–112 (LPTILVILGVIVVIAIVYAII). The tract at residues 121 to 183 (DDHNAASEKA…NDSEKLEIKA (63 aa)) is disordered. Composition is skewed to basic and acidic residues over residues 136–146 (SKYEIPKDSTL) and 154–181 (SEKETDTKKETKENEDKKKENDSEKLEI). Residues 147-185 (KENQNNSSEKETDTKKETKENEDKKKENDSEKLEIKAAG) adopt a coiled-coil conformation.

The protein resides in the cell membrane. This is an uncharacterized protein from Bacillus subtilis (strain 168).